A 285-amino-acid polypeptide reads, in one-letter code: Nucleotide-binding protein Geob_2284 (285 aa).

Residue 8–15 coordinates ATP; the sequence is GLSGSGKS. 59–62 contacts GTP; that stretch reads DIRG.

The protein belongs to the RapZ-like family.

Its function is as follows. Displays ATPase and GTPase activities. This chain is Nucleotide-binding protein Geob_2284, found in Geotalea daltonii (strain DSM 22248 / JCM 15807 / FRC-32) (Geobacter daltonii).